We begin with the raw amino-acid sequence, 203 residues long: Putative GPI-anchored protein YHR214W (203 aa).

The signal sequence occupies residues 1–23 (MFNRFNKFQAAVALALLSRGALG). Residues N28 and N138 are each glycosylated (N-linked (GlcNAc...) asparagine). A lipid anchor (GPI-anchor amidated asparagine) is attached at N184. The propeptide at 185–203 (AGTFSLSNAILNGGSVSGL) is removed in mature form.

It localises to the cell membrane. The sequence is that of Putative GPI-anchored protein YHR214W from Saccharomyces cerevisiae (strain ATCC 204508 / S288c) (Baker's yeast).